The sequence spans 131 residues: Peptide methionine sulfoxide reductase MsrB (131 aa).

Positions Leu-8–Arg-130 constitute a MsrB domain. Zn(2+) is bound by residues Cys-47, Cys-50, Cys-96, and Cys-99. Cys-119 acts as the Nucleophile in catalysis.

The protein belongs to the MsrB Met sulfoxide reductase family. The cofactor is Zn(2+).

It carries out the reaction L-methionyl-[protein] + [thioredoxin]-disulfide + H2O = L-methionyl-(R)-S-oxide-[protein] + [thioredoxin]-dithiol. The chain is Peptide methionine sulfoxide reductase MsrB from Pseudomonas putida (strain ATCC 47054 / DSM 6125 / CFBP 8728 / NCIMB 11950 / KT2440).